Consider the following 338-residue polypeptide: Plasminogen (338 aa).

The Kringle 5 domain maps to 9-88 (CMLGIGKGYQ…LFDYCDVPQC (80 aa)). 9 disulfides stabilise this stretch: cysteine 9-cysteine 88, cysteine 30-cysteine 71, cysteine 59-cysteine 83, cysteine 95-cysteine 213, cysteine 105-cysteine 113, cysteine 135-cysteine 151, cysteine 227-cysteine 294, cysteine 257-cysteine 273, and cysteine 284-cysteine 312. In terms of domain architecture, Peptidase S1 spans 109-336 (IVGGCVAIAH…FINWIERIMQ (228 aa)). The residue at position 125 (serine 125) is a Phosphoserine. Active-site charge relay system residues include histidine 150 and aspartate 193. Serine 288 functions as the Charge relay system in the catalytic mechanism.

Belongs to the peptidase S1 family. Plasminogen subfamily. In terms of assembly, interacts with CSPG4 and AMOT. Interacts (via the Kringle domains) with HRG; the interaction tethers PLG to the cell surface and enhances its activation. Interacts (via Kringle 4 domain) with ADA; the interaction stimulates PLG activation when in complex with DPP4. Angiostatin: Interacts with ATP5F1A; the interaction inhibits most of the angiogenic effects of angiostatin.

The protein localises to the secreted. The catalysed reaction is Preferential cleavage: Lys-|-Xaa &gt; Arg-|-Xaa, higher selectivity than trypsin. Converts fibrin into soluble products.. Its activity is regulated as follows. Converted into plasmin by plasminogen activators, both plasminogen and its activator being bound to fibrin. Activated with catalytic amounts of streptokinase. In terms of biological role, plasmin dissolves the fibrin of blood clots and acts as a proteolytic factor in a variety of other processes including embryonic development, tissue remodeling, tumor invasion, and inflammation. In ovulation, weakens the walls of the Graafian follicle. It activates the urokinase-type plasminogen activator, collagenases and several complement zymogens, such as C1, C4 and C5. Cleavage of fibronectin and laminin leads to cell detachment and apoptosis. Also cleaves fibrin, thrombospondin and von Willebrand factor. Its role in tissue remodeling and tumor invasion may be modulated by CSPG4. Binds to cells. The protein is Plasminogen (PLG) of Equus caballus (Horse).